The chain runs to 475 residues: Ribulose bisphosphate carboxylase large chain (475 aa).

A propeptide spanning residues 1 to 2 (MS) is cleaved from the precursor. P3 carries the N-acetylproline modification. The substrate site is built by N123 and T173. K175 (proton acceptor) is an active-site residue. K177 contributes to the substrate binding site. Mg(2+) is bound by residues K201, D203, and E204. K201 is subject to N6-carboxylysine. H294 acts as the Proton acceptor in catalysis. Substrate is bound by residues R295, H327, and S379.

It belongs to the RuBisCO large chain family. Type I subfamily. In terms of assembly, heterohexadecamer of 8 large chains and 8 small chains; disulfide-linked. The disulfide link is formed within the large subunit homodimers. The cofactor is Mg(2+). Post-translationally, the disulfide bond which can form in the large chain dimeric partners within the hexadecamer appears to be associated with oxidative stress and protein turnover.

Its subcellular location is the plastid. It localises to the chloroplast. It catalyses the reaction 2 (2R)-3-phosphoglycerate + 2 H(+) = D-ribulose 1,5-bisphosphate + CO2 + H2O. The enzyme catalyses D-ribulose 1,5-bisphosphate + O2 = 2-phosphoglycolate + (2R)-3-phosphoglycerate + 2 H(+). Its function is as follows. RuBisCO catalyzes two reactions: the carboxylation of D-ribulose 1,5-bisphosphate, the primary event in carbon dioxide fixation, as well as the oxidative fragmentation of the pentose substrate in the photorespiration process. Both reactions occur simultaneously and in competition at the same active site. The protein is Ribulose bisphosphate carboxylase large chain of Gnetum parvifolium (Small-leaved jointfir).